We begin with the raw amino-acid sequence, 402 residues long: CCA-adding enzyme (402 aa).

The ATP site is built by Gly-32 and Arg-35. CTP contacts are provided by Gly-32 and Arg-35. Mg(2+) is bound by residues Asp-45 and Asp-47. ATP is bound by residues Arg-116, Asp-159, Arg-162, Arg-165, and Arg-168. Residues Arg-116, Asp-159, Arg-162, Arg-165, and Arg-168 each coordinate CTP.

The protein belongs to the tRNA nucleotidyltransferase/poly(A) polymerase family. Bacterial CCA-adding enzyme type 3 subfamily. As to quaternary structure, homodimer. The cofactor is Mg(2+).

It catalyses the reaction a tRNA precursor + 2 CTP + ATP = a tRNA with a 3' CCA end + 3 diphosphate. The enzyme catalyses a tRNA with a 3' CCA end + 2 CTP + ATP = a tRNA with a 3' CCACCA end + 3 diphosphate. Functionally, catalyzes the addition and repair of the essential 3'-terminal CCA sequence in tRNAs without using a nucleic acid template. Adds these three nucleotides in the order of C, C, and A to the tRNA nucleotide-73, using CTP and ATP as substrates and producing inorganic pyrophosphate. tRNA 3'-terminal CCA addition is required both for tRNA processing and repair. Also involved in tRNA surveillance by mediating tandem CCA addition to generate a CCACCA at the 3' terminus of unstable tRNAs. While stable tRNAs receive only 3'-terminal CCA, unstable tRNAs are marked with CCACCA and rapidly degraded. This chain is CCA-adding enzyme, found in Streptococcus agalactiae serotype III (strain NEM316).